The primary structure comprises 402 residues: Tumor necrosis factor receptor superfamily member 11B (402 aa).

Residues 1–21 (MNKLLCCALVFLDISIKWTTQ) form the signal peptide. TNFR-Cys repeat units follow at residues 24-62 (FPPK…KTVC), 64-105 (PCPD…NRVC), 106-142 (ECEE…NTVC), and 144-185 (RCPD…DNIC). 8 cysteine pairs are disulfide-bonded: Cys-41–Cys-54, Cys-44–Cys-62, Cys-65–Cys-80, Cys-83–Cys-97, Cys-87–Cys-105, Cys-107–Cys-118, Cys-124–Cys-142, and Cys-145–Cys-160. Residues Asn-165 and Asn-178 are each glycosylated (N-linked (GlcNAc...) asparagine). A disulfide bond links Cys-166 and Cys-185. 2 Death domains span residues 198-269 (IDMT…DMVK) and 270-365 (KIIQ…VIQS).

In terms of assembly, homodimer. Interacts with TNFSF10 and TNFSF11. In terms of processing, N-glycosylated. Contains sialic acid residues.

Its subcellular location is the secreted. Acts as a decoy receptor for TNFSF11/RANKL and thereby neutralizes its function in osteoclastogenesis. Inhibits the activation of osteoclasts and promotes osteoclast apoptosis. Bone homeostasis seems to depend on the local ratio between TNFSF11 and TNFRSF11B. May also play a role in preventing arterial calcification. May act as decoy receptor for TNFSF10/TRAIL and protect against apoptosis. TNFSF10/TRAIL binding blocks the inhibition of osteoclastogenesis. The chain is Tumor necrosis factor receptor superfamily member 11B (TNFRSF11B) from Bos taurus (Bovine).